Reading from the N-terminus, the 449-residue chain is Ribulose bisphosphate carboxylase large chain (449 aa).

The propeptide occupies 1-2; sequence MS. An N-acetylproline modification is found at P3. K14 carries the N6,N6,N6-trimethyllysine modification. Residues N123 and T173 each contribute to the substrate site. The active-site Proton acceptor is the K175. K177 is a binding site for substrate. Mg(2+) is bound by residues K201, D203, and E204. K201 carries the N6-carboxylysine modification. Catalysis depends on H294, which acts as the Proton acceptor. R295, H327, and S379 together coordinate substrate.

It belongs to the RuBisCO large chain family. Type I subfamily. In terms of assembly, heterohexadecamer of 8 large chains and 8 small chains; disulfide-linked. The disulfide link is formed within the large subunit homodimers. The cofactor is Mg(2+). The disulfide bond which can form in the large chain dimeric partners within the hexadecamer appears to be associated with oxidative stress and protein turnover.

It localises to the plastid. The protein resides in the chloroplast. The enzyme catalyses 2 (2R)-3-phosphoglycerate + 2 H(+) = D-ribulose 1,5-bisphosphate + CO2 + H2O. It carries out the reaction D-ribulose 1,5-bisphosphate + O2 = 2-phosphoglycolate + (2R)-3-phosphoglycerate + 2 H(+). Its function is as follows. RuBisCO catalyzes two reactions: the carboxylation of D-ribulose 1,5-bisphosphate, the primary event in carbon dioxide fixation, as well as the oxidative fragmentation of the pentose substrate in the photorespiration process. Both reactions occur simultaneously and in competition at the same active site. In Hippocratea richardiana, this protein is Ribulose bisphosphate carboxylase large chain.